Reading from the N-terminus, the 819-residue chain is Solute carrier organic anion transporter family member 74D (819 aa).

The segment at 1–157 (MTKSNGDVEA…GSSAESSSSC (157 aa)) is disordered. The Cytoplasmic segment spans residues 1–174 (MTKSNGDVEA…RWARRFASTH (174 aa)). Composition is skewed to polar residues over residues 24–34 (GHGQLNGNGYH), 43–62 (SQAFTPLLSQHNNGTTNGEV), and 71–81 (LYESTPSNNNE). Composition is skewed to low complexity over residues 91 to 111 (LKNGLGNILSSNNNGTGNGHS) and 144 to 157 (DLNGGSSAESSSSC). Residues 175-195 (VFMVVFLLAYILQGMYMTYFV) traverse the membrane as a helical segment. At 196 to 213 (SVITTIEKLFQIKSKTTG) the chain is on the extracellular side. The chain crosses the membrane as a helical span at residues 214-234 (ILLSASEMGQICTAMLLTYFA). Topologically, residues 235 to 242 (GRGHRPRW) are cytoplasmic. Residues 243–263 (IACGMVLFSIAAFSCALPHFI) traverse the membrane as a helical segment. The Extracellular portion of the chain corresponds to 264–332 (FGEQLMHSSV…LEQASHSKIT (69 aa)). Residues N284, N293, and N309 are each glycosylated (N-linked (GlcNAc...) asparagine). The helical transmembrane segment at 333 to 353 (VIVLCIFFGSLLSSGIGQTAV) threads the bilayer. The Cytoplasmic portion of the chain corresponds to 354-373 (ATLGIPYIDDNVGSKQSPMY). A helical membrane pass occupies residues 374–394 (MAVTIGMRILGPASGFIFGSF). The Extracellular portion of the chain corresponds to 395 to 413 (CTRWYVNFSNPGFDATDPR). N-linked (GlcNAc...) asparagine glycosylation occurs at N401. Residues 414-434 (WIGAWWLGPVAIGSLMLLASI) traverse the membrane as a helical segment. The Cytoplasmic segment spans residues 435-488 (AMFSFPKQLRGKQKPPGQTATPAAPVEPEEKPKLKDFPKTVRRQLSNDILMFRT). The interval 444–466 (RGKQKPPGQTATPAAPVEPEEKP) is disordered. Residues 489 to 509 (ASCVFHLLPIAGLYTFLPKYL) traverse the membrane as a helical segment. Over 510-522 (ETQFRLATYDANM) the chain is Extracellular. A helical transmembrane segment spans residues 523 to 543 (IAAFCGILVMGIGIVISGLFI). Residues 544-553 (LKRKPTARGV) lie on the Cytoplasmic side of the membrane. A helical membrane pass occupies residues 554-574 (AAWIAFTALVYSAGMIILMFI). Residues 575-667 (GCSMNDFAGY…NGYCDNNCKN (93 aa)) lie on the Extracellular side of the membrane. One can recognise a Kazal-like domain in the interval 593-651 (ALIEPTCSAALNCTCDKENFAPICADGKMYISACHAGCSSSSLRPSDNRTLYSDCACIP). 3 cysteine pairs are disulfide-bonded: C599/C630, C607/C626, and C616/C649. An N-linked (GlcNAc...) asparagine glycan is attached at N604. N640 carries an N-linked (GlcNAc...) asparagine glycan. Residues 668-688 (FIYFILIFAICVFMHSTSEVG) form a helical membrane-spanning segment. Topologically, residues 689–707 (SMLLVMRCTHPKDKAMAMG) are cytoplasmic. A helical transmembrane segment spans residues 708–728 (VIQSAIGLFGNVPCPIIYGAV). Topologically, residues 729–756 (VDSACLIWKSVCGKHGACSLYDADTFRQ) are extracellular. The chain crosses the membrane as a helical span at residues 757 to 777 (YFLGITAGIMFLAFLMDLVVW). The Cytoplasmic portion of the chain corresponds to 778-819 (RKAHRIDIAPEDPQEGGPASNGRTLEVSESKQPITPAPDTTV). A disordered region spans residues 787–819 (PEDPQEGGPASNGRTLEVSESKQPITPAPDTTV). A compositionally biased stretch (polar residues) spans 807-819 (SKQPITPAPDTTV).

The protein belongs to the organo anion transporter (TC 2.A.60) family.

The protein resides in the cell membrane. Functionally, transporter that mediates the cellular uptake of ecdysteroids, including ecdysone, from the hemolymph. This is Solute carrier organic anion transporter family member 74D from Drosophila melanogaster (Fruit fly).